Here is a 52-residue protein sequence, read N- to C-terminus: Conotoxin reg3h (52 aa).

A signal peptide is located at residue Ala-1. Residues 2–33 (LPLDGDQPADQPAERMQDISPELNPLFHPVKR) constitute a propeptide that is removed on maturation. 3 disulfides stabilise this stretch: Cys-35/Cys-49, Cys-36/Cys-47, and Cys-41/Cys-50. 4-hydroxyproline is present on residues Pro-38, Pro-48, and Pro-51. An Asparagine amide modification is found at Asn-52.

Expressed by the venom duct.

The protein resides in the secreted. The chain is Conotoxin reg3h from Conus regius (Crown cone).